A 336-amino-acid polypeptide reads, in one-letter code: Glyceraldehyde-3-phosphate dehydrogenase, chromosomal (336 aa).

Residues 12–13 (RI), aspartate 37, arginine 81, and serine 123 contribute to the NAD(+) site. D-glyceraldehyde 3-phosphate-binding positions include 154 to 156 (SCT) and threonine 185. Cysteine 155 (nucleophile) is an active-site residue. Asparagine 186 is an NAD(+) binding site. Residues arginine 200, 213 to 214 (TG), and arginine 236 contribute to the D-glyceraldehyde 3-phosphate site. Asparagine 317 lines the NAD(+) pocket.

It belongs to the glyceraldehyde-3-phosphate dehydrogenase family. Homotetramer.

The catalysed reaction is D-glyceraldehyde 3-phosphate + phosphate + NAD(+) = (2R)-3-phospho-glyceroyl phosphate + NADH + H(+). It participates in carbohydrate biosynthesis; Calvin cycle. Could be involved in carbon fixation as a component of the Calvin cycle. Catalyzes the oxidative phosphorylation of glyceraldehyde 3-phosphate (G3P) to 1,3-bisphosphoglycerate (BPG) using the cofactor NAD. The first reaction step involves the formation of a hemiacetal intermediate between G3P and a cysteine residue, and this hemiacetal intermediate is then oxidized to a thioester, with concomitant reduction of NAD to NADH. The reduced NADH is then exchanged with the second NAD, and the thioester is attacked by a nucleophilic inorganic phosphate to produce BPG. The protein is Glyceraldehyde-3-phosphate dehydrogenase, chromosomal (cbbGC) of Cupriavidus necator (strain ATCC 17699 / DSM 428 / KCTC 22496 / NCIMB 10442 / H16 / Stanier 337) (Ralstonia eutropha).